We begin with the raw amino-acid sequence, 419 residues long: MKQTVLKNNLQNLLESAENILLLQGPVGDFFLRLADWLTANGKTVHKFNFNAGDDYFYPPTQAHTVVFNDNYDAFPEFLQEYITQHHIQAVVCFGDTRPYHVIAKRIANENQASFWAFEEGYFRPYYITLEKDGVNAFSPLPRRADFFLEQFPKLAQQEYKAPTPVHGGFTPMAKNAIRYYIELFRNPRKYPDYIHHRAPNAGHYLKPWSLSILKRLNYYIEDIQIAKRVEAGKYGKFFIVPLQVFNDSQVRIHCDFPSVRSFLLHVLSSFAEHAPADTNIIIKHHPMDRGFIDYWRDIKRFIKEHPELKGRVIYVHDVPLPVFLRHGLGMVTINSTSGLSGLIHNMPVKVLGRAYYDIPGITDQNTLAEFWNHPTPPDKELFHAYRMYHLNVTQINGNFYSQVFFPNKKTSNSSTPVI.

It is found in the cell inner membrane. In terms of biological role, involved in the phospholipid modification of the capsular polysaccharide, a strong requirement for its translocation to the cell surface. The polypeptide is Capsule polysaccharide modification protein LipB (lipB) (Neisseria meningitidis serogroup B (strain ATCC BAA-335 / MC58)).